A 196-amino-acid chain; its full sequence is dTDP-4-dehydro-6-deoxyglucose 3-epimerase (196 aa).

Residues Arg-21, Glu-26, 45–47 (QVN), and Arg-57 each bind substrate. His-60 acts as the Proton acceptor in catalysis. Positions 70 and 117 each coordinate substrate. Catalysis depends on Tyr-130, which acts as the Proton donor. Residues Glu-141 and Arg-166 each contribute to the substrate site.

The protein belongs to the dTDP-4-dehydrorhamnose 3,5-epimerase family. In terms of assembly, homodimer.

The enzyme catalyses dTDP-4-dehydro-6-deoxy-alpha-D-glucose = dTDP-4-dehydro-6-deoxy-alpha-D-allose. It participates in antibiotic biosynthesis. Functionally, involved in the biosynthesis of dTDP-6-deoxy-D-allose, an intermediate in the biosynthesis of mycinose, which is one of the two unusual sugars attached to the 16-membered macrolactone ring of the aglycone antibiotic dihydrochalcomycin (GERI-155). Catalyzes the conversion of dTDP-4-oxo-6-deoxyglucose to dTDP-4-oxo-6-deoxyallose, via a C-3 epimerization. The chain is dTDP-4-dehydro-6-deoxyglucose 3-epimerase from Streptomyces sp.